The primary structure comprises 404 residues: Tryptophan synthase beta chain (404 aa).

Residue Lys-98 is modified to N6-(pyridoxal phosphate)lysine.

This sequence belongs to the TrpB family. In terms of assembly, tetramer of two alpha and two beta chains. Pyridoxal 5'-phosphate serves as cofactor.

It carries out the reaction (1S,2R)-1-C-(indol-3-yl)glycerol 3-phosphate + L-serine = D-glyceraldehyde 3-phosphate + L-tryptophan + H2O. It functions in the pathway amino-acid biosynthesis; L-tryptophan biosynthesis; L-tryptophan from chorismate: step 5/5. Its function is as follows. The beta subunit is responsible for the synthesis of L-tryptophan from indole and L-serine. The sequence is that of Tryptophan synthase beta chain from Rhodopseudomonas palustris (strain BisB18).